The following is a 281-amino-acid chain: NAD kinase (281 aa).

Catalysis depends on Asp61, which acts as the Proton acceptor. Residues 61–62 (DG), 134–135 (ND), Arg145, Asp164, 175–180 (TAYSLS), and Gln234 contribute to the NAD(+) site.

Belongs to the NAD kinase family. Requires a divalent metal cation as cofactor.

It localises to the cytoplasm. The catalysed reaction is NAD(+) + ATP = ADP + NADP(+) + H(+). Functionally, involved in the regulation of the intracellular balance of NAD and NADP, and is a key enzyme in the biosynthesis of NADP. Catalyzes specifically the phosphorylation on 2'-hydroxyl of the adenosine moiety of NAD to yield NADP. The sequence is that of NAD kinase from Clostridium botulinum (strain ATCC 19397 / Type A).